Reading from the N-terminus, the 329-residue chain is Ubiquinol oxidase 1c, mitochondrial (329 aa).

The transit peptide at 1-45 (MITTLLRRSLLDASKQATSINGILFHQLAPAKYFRVPAVGGLRDF) directs the protein to the mitochondrion. A helical transmembrane segment spans residues 154–174 (AIMLETVAAVPGMVGGMLMHF). Residues glutamate 158, glutamate 197, and histidine 200 each coordinate Fe cation. A helical membrane pass occupies residues 216 to 236 (ALVISVQGVFFNAYLIGYIIS). Residues glutamate 248, glutamate 299, and histidine 302 each contribute to the Fe cation site.

Belongs to the alternative oxidase family. Homodimer; disulfide-linked. Fe cation serves as cofactor. Expressed in roots, stems, leaves, cotyledons and flowers. High expression in stamens.

Its subcellular location is the mitochondrion inner membrane. The catalysed reaction is 2 a ubiquinol + O2 = 2 a ubiquinone + 2 H2O. Catalyzes the cyanide-resistant oxidation of ubiquinol and the reduction of molecular oxygen to water, but does not translocate protons and consequently is not linked to oxidative phosphorylation. May increase respiration when the cytochrome respiratory pathway is restricted, or in response to low temperatures. In Arabidopsis thaliana (Mouse-ear cress), this protein is Ubiquinol oxidase 1c, mitochondrial (AOX1C).